Here is an 89-residue protein sequence, read N- to C-terminus: cAMP-regulated phosphoprotein 21 (89 aa).

Positions 1-89 (MSEPGDLSQT…GGESLQDQTL (89 aa)) are disordered. Ser-2 is subject to N-acetylserine. Phosphoserine is present on residues Ser-33 and Ser-56.

Interacts with CALM1. In terms of processing, phosphorylation at Ser-56 favors interaction with CALM1.

It localises to the cytoplasm. May act as a competitive inhibitor of calmodulin-dependent enzymes such as calcineurin in neurons. This Bos taurus (Bovine) protein is cAMP-regulated phosphoprotein 21 (ARPP21).